We begin with the raw amino-acid sequence, 188 residues long: Ribosome-recycling factor (188 aa).

The protein belongs to the RRF family.

It localises to the cytoplasm. Responsible for the release of ribosomes from messenger RNA at the termination of protein biosynthesis. May increase the efficiency of translation by recycling ribosomes from one round of translation to another. In Cereibacter sphaeroides (strain ATCC 17029 / ATH 2.4.9) (Rhodobacter sphaeroides), this protein is Ribosome-recycling factor.